A 243-amino-acid chain; its full sequence is Mannosyl-3-phosphoglycerate phosphatase (243 aa).

Catalysis depends on Asp8, which acts as the Nucleophile. Positions 8, 10, 169, and 204 each coordinate Mg(2+).

It belongs to the HAD-like hydrolase superfamily. MPGP family. Requires Mg(2+) as cofactor.

The protein resides in the cytoplasm. It carries out the reaction 2-O-(alpha-D-mannosyl)-3-phosphoglycerate + H2O = (2R)-2-O-(alpha-D-mannosyl)-glycerate + phosphate. The protein operates within carbohydrate biosynthesis; 2-(alpha-D-mannosyl)-D-glycerate biosynthesis; 2-(alpha-D-mannosyl)-D-glycerate from GDP-alpha-D-mannose (MPG route): step 2/2. Functionally, hydrolyzes mannosyl-3-phosphoglycerate (MPG) to form the osmolyte mannosylglycerate (MG). The enzyme is absolutely specific for MPG. In Pyrococcus horikoshii (strain ATCC 700860 / DSM 12428 / JCM 9974 / NBRC 100139 / OT-3), this protein is Mannosyl-3-phosphoglycerate phosphatase.